Reading from the N-terminus, the 318-residue chain is Methionyl-tRNA formyltransferase (318 aa).

S110–P113 contacts (6S)-5,6,7,8-tetrahydrofolate.

It belongs to the Fmt family.

It carries out the reaction L-methionyl-tRNA(fMet) + (6R)-10-formyltetrahydrofolate = N-formyl-L-methionyl-tRNA(fMet) + (6S)-5,6,7,8-tetrahydrofolate + H(+). Functionally, attaches a formyl group to the free amino group of methionyl-tRNA(fMet). The formyl group appears to play a dual role in the initiator identity of N-formylmethionyl-tRNA by promoting its recognition by IF2 and preventing the misappropriation of this tRNA by the elongation apparatus. The sequence is that of Methionyl-tRNA formyltransferase from Lacticaseibacillus casei (strain BL23) (Lactobacillus casei).